The primary structure comprises 96 residues: Small ribosomal subunit protein bS18 (96 aa).

Basic residues predominate over residues 1–18 (MPPPRGKGRFGKDKRPKR). The tract at residues 1-21 (MPPPRGKGRFGKDKRPKRNTQ) is disordered.

Belongs to the bacterial ribosomal protein bS18 family. In terms of assembly, part of the 30S ribosomal subunit. Forms a tight heterodimer with protein bS6.

Functionally, binds as a heterodimer with protein bS6 to the central domain of the 16S rRNA, where it helps stabilize the platform of the 30S subunit. This Methylibium petroleiphilum (strain ATCC BAA-1232 / LMG 22953 / PM1) protein is Small ribosomal subunit protein bS18.